Here is a 128-residue protein sequence, read N- to C-terminus: Cytochrome c oxidase subunit 5B, mitochondrial (128 aa).

Residues 1–30 constitute a mitochondrion transit peptide; the sequence is MKRGSAALEVRELKMQTPTASCVLSTQRAN. An N6-acetyllysine mark is found at lysine 67 and lysine 85. Zn(2+) is bound by residues cysteine 90, cysteine 92, cysteine 112, and cysteine 115. Lysine 120 carries the N6-acetyllysine modification.

The protein belongs to the cytochrome c oxidase 5b family. Expressed in testis. Not expressed in brain, heart, liver, kidney, spleen, lung, duodenum, muscle, epididymis, vagina, uterus and ovary.

It localises to the mitochondrion inner membrane. In terms of biological role, this protein is one of the nuclear-coded polypeptide chains of cytochrome c oxidase, the terminal oxidase in mitochondrial electron transport. The sequence is that of Cytochrome c oxidase subunit 5B, mitochondrial from Vulpes vulpes (Red fox).